A 206-amino-acid polypeptide reads, in one-letter code: Small ribosomal subunit protein uS4 (206 aa).

The region spanning 96 to 156 (GRLDNVVYRM…EKSKKQARIK (61 aa)) is the S4 RNA-binding domain.

The protein belongs to the universal ribosomal protein uS4 family. Part of the 30S ribosomal subunit. Contacts protein S5. The interaction surface between S4 and S5 is involved in control of translational fidelity.

Its function is as follows. One of the primary rRNA binding proteins, it binds directly to 16S rRNA where it nucleates assembly of the body of the 30S subunit. Functionally, with S5 and S12 plays an important role in translational accuracy. The sequence is that of Small ribosomal subunit protein uS4 from Haemophilus influenzae (strain 86-028NP).